A 324-amino-acid polypeptide reads, in one-letter code: Heat-inducible transcription repressor HrcA (324 aa).

Belongs to the HrcA family.

Its function is as follows. Negative regulator of class I heat shock genes (grpE-dnaK-dnaJ and groELS operons). Prevents heat-shock induction of these operons. The sequence is that of Heat-inducible transcription repressor HrcA from Parasynechococcus marenigrum (strain WH8102).